The primary structure comprises 342 residues: MTTTPNQGTSHAPIFDLVTDVFGTGRHKPNRTGVDTISGFSKHYTVDLQEGFPLLTTKDLSGFRWNSLIHELLWYFSGEEHIRTLREETGIWDAWADEEGHLDTAYGRFWRRYPVPEEGLAGEAWPDDGHRWMNDEGTFDQLAYVLDTLDENPNSRRLVINAWHPANAAVSTLPPCHYTFVFNVQGDELNLHLTQRSGDIALGVPFNLAAYAILAQVVAQRAGFELGSFAHTIVDAHVYCGAGERGAWYGDHLDELQSRLADVQSPDEYLDVREWLLDAAPEEADGEEDYDHVPGLLLQASREPRERPALDVADVPLEDLSFEDIVLRDYDPADGIRFAVAE.

DUMP-binding positions include Arg31 and 156–157; that span reads RR. Cys176 acts as the Nucleophile in catalysis. DUMP-binding positions include 196–199, Asn207, and 237–239; these read RSGD and HVY. Asp199 serves as a coordination point for (6R)-5,10-methylene-5,6,7,8-tetrahydrofolate. A (6R)-5,10-methylene-5,6,7,8-tetrahydrofolate-binding site is contributed by Ala341.

It belongs to the thymidylate synthase family. Bacterial-type ThyA subfamily. Homodimer.

It localises to the cytoplasm. The enzyme catalyses dUMP + (6R)-5,10-methylene-5,6,7,8-tetrahydrofolate = 7,8-dihydrofolate + dTMP. The protein operates within pyrimidine metabolism; dTTP biosynthesis. Its function is as follows. Catalyzes the reductive methylation of 2'-deoxyuridine-5'-monophosphate (dUMP) to 2'-deoxythymidine-5'-monophosphate (dTMP) while utilizing 5,10-methylenetetrahydrofolate (mTHF) as the methyl donor and reductant in the reaction, yielding dihydrofolate (DHF) as a by-product. This enzymatic reaction provides an intracellular de novo source of dTMP, an essential precursor for DNA biosynthesis. The chain is Thymidylate synthase from Haloferax volcanii (Halobacterium volcanii).